Here is a 410-residue protein sequence, read N- to C-terminus: MAEAGPQAPPPPGTPSRHEKSLGLLTTKFVSLLQEAKDGVLDLKLAADTLAVRQKRRIYDITNVLEGIGLIEKKSKNSIQWKGVGPGCNTREIADKLIELKAEIEELQQREQELDQHKVWVQQSIRNVTEDVQNSCLAYVTHEDICRCFAGDTLLAIRAPSGTSLEVPIPEGLNGQKKYQIHLKSMSGPIEVLLVNKEAWSSPPVAVPVPPPDDLLQSPPAVSTPPPLPKPALAQPQESSPPSSPQLTTPTPVLGSTQVSEVACQTSEIAVSGSPGTENKDSGEVSSLPLGLTALDTRPLQSSALLDSSSSSSSSSSSSSSSSSGPNPSTSFEPIKADPTGVLDLPKELSEIFDPTRECMSSELLEELMSSEVFAPLLRLSPPPGDHDYIYNLDESEGVCDLFDVPVLKL.

The tract at residues 1-20 is disordered; sequence MAEAGPQAPPPPGTPSRHEK. N-acetylalanine is present on Ala-2. The DNA-binding element occupies 16 to 85; sequence SRHEKSLGLL…KNSIQWKGVG (70 aa). Residues 43–65 form a leucine-zipper region; it reads LKLAADTLAVRQKRRIYDITNVL. Positions 48-85 match the DEF box motif; sequence DTLAVRQKRRIYDITNVLEGIGLIEKKSKNSIQWKGVG. Residues 86 to 181 are dimerization; the sequence is PGCNTREIAD…GLNGQKKYQI (96 aa). Disordered regions lie at residues 203–258 and 303–341; these read PPVA…GSTQ and SALL…DPTG. Composition is skewed to low complexity over residues 231–252 and 308–324; these read PALA…TPTP and SSSS…SSSS. Positions 334-410 are transactivation; it reads PIKADPTGVL…DLFDVPVLKL (77 aa). At Ser-381 the chain carries Phosphoserine. The HCFC1-binding-motif (HBM) signature appears at 386 to 389; it reads DHDY. The interaction with RBL1 and RBL2 stretch occupies residues 387–404; it reads HDYIYNLDESEGVCDLFD.

The protein belongs to the E2F/DP family. In terms of assembly, component of the DRTF1/E2F transcription factor complex. Binds cooperatively with TFDP1/Dp-1 to E2F sites. The E2F4/TFDP1 dimer interacts preferentially with pocket protein RBL1, which inhibits the E2F transactivation domain. Lower affinity interaction has been found with retinoblastoma protein RB1. Interacts with TRRAP, which probably mediates its interaction with histone acetyltransferase complexes, leading to transcription activation. Interacts with HCFC1. Component of the DREAM complex (also named LINC complex) at least composed of E2F4, E2F5, LIN9, LIN37, LIN52, LIN54, MYBL1, MYBL2, RBL1, RBL2, RBBP4, TFDP1 and TFDP2. The complex exists in quiescent cells where it represses cell cycle-dependent genes. It dissociates in S phase when LIN9, LIN37, LIN52 and LIN54 form a subcomplex that binds to MYBL2. Interacts with PML. Interacts with CEBPA (when phosphorylated). In terms of processing, differentially phosphorylated in vivo.

It localises to the nucleus. Functionally, transcription activator that binds DNA cooperatively with DP proteins through the E2 recognition site, 5'-TTTC[CG]CGC-3' found in the promoter region of a number of genes whose products are involved in cell cycle regulation or in DNA replication. The DRTF1/E2F complex functions in the control of cell-cycle progression from G1 to S phase. E2F4 binds with high affinity to RBL1 and RBL2. In some instances can also bind RB1. Specifically required for multiciliate cell differentiation: together with MCIDAS and E2F5, binds and activate genes required for centriole biogenesis. In Mus musculus (Mouse), this protein is Transcription factor E2F4 (E2f4).